An 80-amino-acid chain; its full sequence is UPF0291 protein LCA_1274 (80 aa).

A disordered region spans residues 59 to 80; sequence EGKEVTPEKVKDIQREKGLRDD.

This sequence belongs to the UPF0291 family.

Its subcellular location is the cytoplasm. The chain is UPF0291 protein LCA_1274 from Latilactobacillus sakei subsp. sakei (strain 23K) (Lactobacillus sakei subsp. sakei).